The primary structure comprises 302 residues: Geranylgeranyl diphosphate synthase (302 aa).

Residues lysine 53, arginine 56, and histidine 87 each contribute to the isopentenyl diphosphate site. Mg(2+) is bound by residues aspartate 94 and aspartate 100. Arginine 105 is a (2E,6E)-farnesyl diphosphate binding site. Residue arginine 106 coordinates isopentenyl diphosphate. (2E,6E)-farnesyl diphosphate is bound by residues lysine 189, threonine 190, and glutamine 227.

Belongs to the FPP/GGPP synthase family. The cofactor is Mg(2+).

It carries out the reaction isopentenyl diphosphate + (2E,6E)-farnesyl diphosphate = (2E,6E,10E)-geranylgeranyl diphosphate + diphosphate. Its pathway is isoprenoid biosynthesis; geranylgeranyl diphosphate biosynthesis; geranylgeranyl diphosphate from farnesyl diphosphate and isopentenyl diphosphate: step 1/1. Catalyzes the condensation of farnesyl diphosphate (FPP) and isopentenyl diphosphate (IPP) to yield geranylgeranyl diphosphate (GGPP) needed for biosynthesis of carotenoids and diterpenes. The chain is Geranylgeranyl diphosphate synthase (crtE) from Pantoea ananas (Erwinia uredovora).